The following is a 230-amino-acid chain: Phosphatidylserine decarboxylase proenzyme (230 aa).

Residue Ser-186 is the Schiff-base intermediate with substrate; via pyruvic acid of the active site. Ser-186 is subject to Pyruvic acid (Ser); by autocatalysis.

The protein belongs to the phosphatidylserine decarboxylase family. PSD-A subfamily. As to quaternary structure, heterodimer of a large membrane-associated beta subunit and a small pyruvoyl-containing alpha subunit. It depends on pyruvate as a cofactor. Post-translationally, is synthesized initially as an inactive proenzyme. Formation of the active enzyme involves a self-maturation process in which the active site pyruvoyl group is generated from an internal serine residue via an autocatalytic post-translational modification. Two non-identical subunits are generated from the proenzyme in this reaction, and the pyruvate is formed at the N-terminus of the alpha chain, which is derived from the carboxyl end of the proenzyme. The post-translation cleavage follows an unusual pathway, termed non-hydrolytic serinolysis, in which the side chain hydroxyl group of the serine supplies its oxygen atom to form the C-terminus of the beta chain, while the remainder of the serine residue undergoes an oxidative deamination to produce ammonia and the pyruvoyl prosthetic group on the alpha chain.

Its subcellular location is the cell membrane. It catalyses the reaction a 1,2-diacyl-sn-glycero-3-phospho-L-serine + H(+) = a 1,2-diacyl-sn-glycero-3-phosphoethanolamine + CO2. The protein operates within phospholipid metabolism; phosphatidylethanolamine biosynthesis; phosphatidylethanolamine from CDP-diacylglycerol: step 2/2. Catalyzes the formation of phosphatidylethanolamine (PtdEtn) from phosphatidylserine (PtdSer). This Wolbachia pipientis wMel protein is Phosphatidylserine decarboxylase proenzyme.